The following is a 272-amino-acid chain: Formamidopyrimidine-DNA glycosylase (272 aa).

P2 acts as the Schiff-base intermediate with DNA in catalysis. The active-site Proton donor is E3. The Proton donor; for beta-elimination activity role is filled by K58. Positions 92, 111, and 153 each coordinate DNA. The segment at 238–272 (NVYGRGGEPCPVCAKPLTEKPLSQRTTVYCTHCQN) adopts an FPG-type zinc-finger fold. R262 acts as the Proton donor; for delta-elimination activity in catalysis.

This sequence belongs to the FPG family. In terms of assembly, monomer. Requires Zn(2+) as cofactor.

The enzyme catalyses Hydrolysis of DNA containing ring-opened 7-methylguanine residues, releasing 2,6-diamino-4-hydroxy-5-(N-methyl)formamidopyrimidine.. It catalyses the reaction 2'-deoxyribonucleotide-(2'-deoxyribose 5'-phosphate)-2'-deoxyribonucleotide-DNA = a 3'-end 2'-deoxyribonucleotide-(2,3-dehydro-2,3-deoxyribose 5'-phosphate)-DNA + a 5'-end 5'-phospho-2'-deoxyribonucleoside-DNA + H(+). Its function is as follows. Involved in base excision repair of DNA damaged by oxidation or by mutagenic agents. Acts as a DNA glycosylase that recognizes and removes damaged bases. Has a preference for oxidized purines, such as 7,8-dihydro-8-oxoguanine (8-oxoG). Has AP (apurinic/apyrimidinic) lyase activity and introduces nicks in the DNA strand. Cleaves the DNA backbone by beta-delta elimination to generate a single-strand break at the site of the removed base with both 3'- and 5'-phosphates. The polypeptide is Formamidopyrimidine-DNA glycosylase (Teredinibacter turnerae (strain ATCC 39867 / T7901)).